The sequence spans 403 residues: SEC14-like protein 2 (403 aa).

2 positions are modified to N6-succinyllysine: Lys11 and Lys51. In terms of domain architecture, CRAL-TRIO spans 76–249; that stretch reads PPEVVQQYLS…EYGGTMTDPD (174 aa). 2 positions are modified to N6-succinyllysine: Lys253 and Lys257. Residues 275-383 enclose the GOLD domain; sequence KQQYEHSVQI…AKKVSFTVEV (109 aa). Lys393 carries the N6-succinyllysine modification.

In terms of assembly, monomer. In terms of processing, the N-terminus is blocked.

It localises to the cytoplasm. The protein resides in the nucleus. Functionally, carrier protein. Binds to some hydrophobic molecules and promotes their transfer between the different cellular sites. Binds with high affinity to alpha-tocopherol. Also binds with a weaker affinity to other tocopherols and to tocotrienols. May have a transcriptional activatory activity via its association with alpha-tocopherol. Probably recognizes and binds some squalene structure, suggesting that it may regulate cholesterol biosynthesis by increasing the transfer of squalene to a metabolic active pool in the cell. This chain is SEC14-like protein 2 (SEC14L2), found in Bos taurus (Bovine).